The primary structure comprises 243 residues: Probable transcriptional regulatory protein LSEI_1022 (243 aa).

The tract at residues Met1–Lys23 is disordered.

This sequence belongs to the TACO1 family.

Its subcellular location is the cytoplasm. This chain is Probable transcriptional regulatory protein LSEI_1022, found in Lacticaseibacillus paracasei (strain ATCC 334 / BCRC 17002 / CCUG 31169 / CIP 107868 / KCTC 3260 / NRRL B-441) (Lactobacillus paracasei).